A 399-amino-acid polypeptide reads, in one-letter code: Phosphoglycerate kinase (399 aa).

Residues 22–24, arginine 38, 61–64, arginine 120, and arginine 153 contribute to the substrate site; these read DFN and HLGR. ATP-binding positions include lysine 204, glutamate 326, and 352-355; that span reads GGDT.

This sequence belongs to the phosphoglycerate kinase family. In terms of assembly, monomer.

It localises to the cytoplasm. The enzyme catalyses (2R)-3-phosphoglycerate + ATP = (2R)-3-phospho-glyceroyl phosphate + ADP. It functions in the pathway carbohydrate degradation; glycolysis; pyruvate from D-glyceraldehyde 3-phosphate: step 2/5. The sequence is that of Phosphoglycerate kinase from Pelobacter propionicus (strain DSM 2379 / NBRC 103807 / OttBd1).